Here is a 251-residue protein sequence, read N- to C-terminus: tRNA-uridine aminocarboxypropyltransferase 2 (251 aa).

Positions 23, 26, 33, and 35 each coordinate Zn(2+). Positions 131–134 match the DXTW motif; the sequence is DGTW.

Belongs to the TDD superfamily. DTWD2 family.

It carries out the reaction a uridine in tRNA + S-adenosyl-L-methionine = a 3-[(3S)-3-amino-3-carboxypropyl]uridine in tRNA + S-methyl-5'-thioadenosine + H(+). In terms of biological role, catalyzes the formation of 3-(3-amino-3-carboxypropyl)uridine (acp3U) at position 20a in the D-loop of several cytoplasmic tRNAs (acp3U(20a)). This chain is tRNA-uridine aminocarboxypropyltransferase 2, found in Drosophila melanogaster (Fruit fly).